Reading from the N-terminus, the 459-residue chain is Bifunctional protein GlmU (459 aa).

The interval 1–229 (MTNYAIILAA…FDESLGVNDR (229 aa)) is pyrophosphorylase. UDP-N-acetyl-alpha-D-glucosamine is bound by residues 8–11 (LAAG), Lys22, Gln72, and 77–78 (GT). Asp102 is a binding site for Mg(2+). UDP-N-acetyl-alpha-D-glucosamine is bound by residues Gly139, Glu154, Asn169, and Asn227. Asn227 contributes to the Mg(2+) binding site. The segment at 230–250 (VALATAESVMRRRINQKHMVN) is linker. Positions 251-459 (GVSFVNPDAT…KRLPHHPQNK (209 aa)) are N-acetyltransferase. Residues Arg332 and Lys350 each coordinate UDP-N-acetyl-alpha-D-glucosamine. His362 functions as the Proton acceptor in the catalytic mechanism. Residues Tyr365 and Asn376 each coordinate UDP-N-acetyl-alpha-D-glucosamine. Acetyl-CoA contacts are provided by residues Ala379, 385-386 (NY), Ser404, Ala422, and Arg439.

It in the N-terminal section; belongs to the N-acetylglucosamine-1-phosphate uridyltransferase family. In the C-terminal section; belongs to the transferase hexapeptide repeat family. As to quaternary structure, homotrimer. It depends on Mg(2+) as a cofactor.

It is found in the cytoplasm. The catalysed reaction is alpha-D-glucosamine 1-phosphate + acetyl-CoA = N-acetyl-alpha-D-glucosamine 1-phosphate + CoA + H(+). It catalyses the reaction N-acetyl-alpha-D-glucosamine 1-phosphate + UTP + H(+) = UDP-N-acetyl-alpha-D-glucosamine + diphosphate. It participates in nucleotide-sugar biosynthesis; UDP-N-acetyl-alpha-D-glucosamine biosynthesis; N-acetyl-alpha-D-glucosamine 1-phosphate from alpha-D-glucosamine 6-phosphate (route II): step 2/2. The protein operates within nucleotide-sugar biosynthesis; UDP-N-acetyl-alpha-D-glucosamine biosynthesis; UDP-N-acetyl-alpha-D-glucosamine from N-acetyl-alpha-D-glucosamine 1-phosphate: step 1/1. Its pathway is bacterial outer membrane biogenesis; LPS lipid A biosynthesis. In terms of biological role, catalyzes the last two sequential reactions in the de novo biosynthetic pathway for UDP-N-acetylglucosamine (UDP-GlcNAc). The C-terminal domain catalyzes the transfer of acetyl group from acetyl coenzyme A to glucosamine-1-phosphate (GlcN-1-P) to produce N-acetylglucosamine-1-phosphate (GlcNAc-1-P), which is converted into UDP-GlcNAc by the transfer of uridine 5-monophosphate (from uridine 5-triphosphate), a reaction catalyzed by the N-terminal domain. This is Bifunctional protein GlmU from Streptococcus gordonii (strain Challis / ATCC 35105 / BCRC 15272 / CH1 / DL1 / V288).